The sequence spans 619 residues: Dihydroxy-acid dehydratase (619 aa).

Residue Asp81 participates in Mg(2+) binding. Cys122 provides a ligand contact to [2Fe-2S] cluster. Mg(2+)-binding residues include Asp123 and Lys124. Position 124 is an N6-carboxylysine (Lys124). Cys195 serves as a coordination point for [2Fe-2S] cluster. Mg(2+) is bound at residue Glu494. The active-site Proton acceptor is Ser520.

This sequence belongs to the IlvD/Edd family. In terms of assembly, homodimer. The cofactor is [2Fe-2S] cluster. Mg(2+) is required as a cofactor.

It carries out the reaction (2R)-2,3-dihydroxy-3-methylbutanoate = 3-methyl-2-oxobutanoate + H2O. The catalysed reaction is (2R,3R)-2,3-dihydroxy-3-methylpentanoate = (S)-3-methyl-2-oxopentanoate + H2O. It functions in the pathway amino-acid biosynthesis; L-isoleucine biosynthesis; L-isoleucine from 2-oxobutanoate: step 3/4. It participates in amino-acid biosynthesis; L-valine biosynthesis; L-valine from pyruvate: step 3/4. Its function is as follows. Functions in the biosynthesis of branched-chain amino acids. Catalyzes the dehydration of (2R,3R)-2,3-dihydroxy-3-methylpentanoate (2,3-dihydroxy-3-methylvalerate) into 2-oxo-3-methylpentanoate (2-oxo-3-methylvalerate) and of (2R)-2,3-dihydroxy-3-methylbutanoate (2,3-dihydroxyisovalerate) into 2-oxo-3-methylbutanoate (2-oxoisovalerate), the penultimate precursor to L-isoleucine and L-valine, respectively. The chain is Dihydroxy-acid dehydratase from Shewanella denitrificans (strain OS217 / ATCC BAA-1090 / DSM 15013).